A 499-amino-acid chain; its full sequence is Phenylalanine--tRNA ligase alpha subunit B (499 aa).

Residues T330, Q373–E375, and Y413 each bind L-phenylalanine. E415 contributes to the Mg(2+) binding site. F439 contributes to the L-phenylalanine binding site.

It belongs to the class-II aminoacyl-tRNA synthetase family. Phe-tRNA synthetase alpha subunit type 2 subfamily. As to quaternary structure, heterotetramer; dimer of two heterodimers formed by alpha and beta subunits. It depends on Mg(2+) as a cofactor.

The protein resides in the cytoplasm. It carries out the reaction tRNA(Phe) + L-phenylalanine + ATP = L-phenylalanyl-tRNA(Phe) + AMP + diphosphate + H(+). The protein is Phenylalanine--tRNA ligase alpha subunit B (farsa-b) of Xenopus laevis (African clawed frog).